The primary structure comprises 663 residues: UvrABC system protein B (663 aa).

The segment covering 1 to 10 (MIDKRDDKPF) has biased composition (basic and acidic residues). The disordered stretch occupies residues 1-23 (MIDKRDDKPFKLKSKYKPSGDQP). Residues 31 to 418 (DNIEGGEKAQ…TNTIIEQIIR (388 aa)) enclose the Helicase ATP-binding domain. Position 44–51 (44–51 (GATGTGKT)) interacts with ATP. The Beta-hairpin motif lies at 97 to 120 (YYDYYQPEAYVPSSDTYIEKDSSV). One can recognise a Helicase C-terminal domain in the interval 435-601 (QMDDLLGEIN…TIKKDIRGLI (167 aa)). Positions 627–662 (KEAINALQKQMQEAAELLDFELAAQMRDLILELKLM) constitute a UVR domain.

The protein belongs to the UvrB family. In terms of assembly, forms a heterotetramer with UvrA during the search for lesions. Interacts with UvrC in an incision complex.

It localises to the cytoplasm. In terms of biological role, the UvrABC repair system catalyzes the recognition and processing of DNA lesions. A damage recognition complex composed of 2 UvrA and 2 UvrB subunits scans DNA for abnormalities. Upon binding of the UvrA(2)B(2) complex to a putative damaged site, the DNA wraps around one UvrB monomer. DNA wrap is dependent on ATP binding by UvrB and probably causes local melting of the DNA helix, facilitating insertion of UvrB beta-hairpin between the DNA strands. Then UvrB probes one DNA strand for the presence of a lesion. If a lesion is found the UvrA subunits dissociate and the UvrB-DNA preincision complex is formed. This complex is subsequently bound by UvrC and the second UvrB is released. If no lesion is found, the DNA wraps around the other UvrB subunit that will check the other stand for damage. This Streptococcus pyogenes serotype M1 protein is UvrABC system protein B.